We begin with the raw amino-acid sequence, 152 residues long: Transcriptional repressor NrdR (152 aa).

A zinc finger lies at 3-34 (CPFCSTEETKVIDSRLVSEGYQVRRRRECTNC). One can recognise an ATP-cone domain in the interval 49-139 (PKIVKTDGYR…VYLSFENINE (91 aa)).

The protein belongs to the NrdR family. Zn(2+) serves as cofactor.

Negatively regulates transcription of bacterial ribonucleotide reductase nrd genes and operons by binding to NrdR-boxes. In Actinobacillus succinogenes (strain ATCC 55618 / DSM 22257 / CCUG 43843 / 130Z), this protein is Transcriptional repressor NrdR.